The chain runs to 635 residues: Threonine--tRNA ligase (635 aa).

Positions 1–61 (MINISFPDGS…EHDCKLRILT (61 aa)) constitute a TGS domain. A catalytic region spans residues 242–533 (DHRKIGKELD…LIEEYAGKFP (292 aa)). Positions 333, 384, and 510 each coordinate Zn(2+).

The protein belongs to the class-II aminoacyl-tRNA synthetase family. Homodimer. Zn(2+) serves as cofactor.

The protein resides in the cytoplasm. It catalyses the reaction tRNA(Thr) + L-threonine + ATP = L-threonyl-tRNA(Thr) + AMP + diphosphate + H(+). Its function is as follows. Catalyzes the attachment of threonine to tRNA(Thr) in a two-step reaction: L-threonine is first activated by ATP to form Thr-AMP and then transferred to the acceptor end of tRNA(Thr). Also edits incorrectly charged L-seryl-tRNA(Thr). This is Threonine--tRNA ligase from Rickettsia typhi (strain ATCC VR-144 / Wilmington).